A 378-amino-acid polypeptide reads, in one-letter code: Chaperone protein DnaJ (378 aa).

The region spanning 5–69 is the J domain; sequence EYYDRLGVSK…QKRAAYDQYG (65 aa). The CR-type zinc-finger motif lies at 134–216; sequence GVEKEVSYNR…CHGTGHEKQA (83 aa). Residues cysteine 147, cysteine 150, cysteine 164, cysteine 167, cysteine 190, cysteine 193, cysteine 204, and cysteine 207 each contribute to the Zn(2+) site. CXXCXGXG motif repeat units lie at residues 147–154, 164–171, 190–197, and 204–211; these read CGTCLGSG, CRKCHGSG, CDICHGSG, and CQTCHGTG.

Belongs to the DnaJ family. Homodimer. Requires Zn(2+) as cofactor.

It is found in the cytoplasm. Participates actively in the response to hyperosmotic and heat shock by preventing the aggregation of stress-denatured proteins and by disaggregating proteins, also in an autonomous, DnaK-independent fashion. Unfolded proteins bind initially to DnaJ; upon interaction with the DnaJ-bound protein, DnaK hydrolyzes its bound ATP, resulting in the formation of a stable complex. GrpE releases ADP from DnaK; ATP binding to DnaK triggers the release of the substrate protein, thus completing the reaction cycle. Several rounds of ATP-dependent interactions between DnaJ, DnaK and GrpE are required for fully efficient folding. Also involved, together with DnaK and GrpE, in the DNA replication of plasmids through activation of initiation proteins. The chain is Chaperone protein DnaJ from Streptococcus pyogenes serotype M1.